The chain runs to 2144 residues: MYALHLAVNAIRAGDCESAIVASANWIGDPGVQIALDKLGALSASARCHTFDLRAEGYARGEGFGAIYLKKTSLAISSGSPIRAMIRGTAMNSNGRTGGITRPSASGQEAVIREAYRNAGRLSFKDTGYFECHGTGTYVGDPIEVAAVGRVFASDRNDSAPLLVGSVKSNVGHSEGASALAAVMKVVLALENGAIPPIYDLQTRNPNIDFEGARVLPVTEVTEWPKDRLRRASINSFGYGGANAHCIIDHVNNVLADYEAPGVYRSIDDSSRNGVQNGHLNEFAANGTTNAPSRDHRNGITDGRADGNTNGHPNANGDVGGNPINGQANGDALMIHHPPMVRIPKKMRNAITRRLVLLPLSAHNETSLDRNWAEISQVLPTFPLFDIAYTLGARRSRYPQRTFTVVNSHTPVQTQSLVLDRKPTRAPLQTATIGFVFTGQGAQWHAMGADLWDYAVFRAVIQYQDNVLACLQNAPTWSLESVLRGDCEAGLVQTAAVSQAACTAVQVGLVDLLASWSIRPAGVVGHSSGEIAAAYASGRISAAEAIVAAYLRGQAVSLNGREGAMLAVGLGPEQVAEYVQEREAEVKVAAINSPGSVTLSGDVSAIDQLAATLTAEGIFNRKLHTGGNAYHSHHMMAIGNAYMAMLRDADGHMHAHRGDRYPHVSWVSSVTPTKSTPTSSTDGTDVVDLGPYWRSNLESRVRFAEAISRLVESIPVSVLVEIGPHPALKSPVEQILKSVGKTAGYVGTLKRNEDGQQSLLQLAGTLFTLNAVVDLAAVNAVDTADGSGSECGATCTSLPRYQYTYGGLNYHESRHSKEYRHRMELRHDLLGSKVVGTARLRPQWRNILRIKDVPWLGHHRLVPDAILPGAAYMAMAVEAVGHIYRGGVEAHVTVTGFELSDVTIDRSLVVPEDDYGVEVLTSLELTFDFFDVLTTATFSISSVGRDTGEWVQHCTGCVKLIIKSSNVDDISHTIQVPETLRPVDVRAWYTPTGRFQKVGLGYGPAFQPLTDVSSDGNHLAVASVALHTPSEHGAVKGGESDYPLHPAALDGAIQLGLIACHGGRPSEVTAAFVPVHLSRMYLSNDINDATAYGDAPTVVACGERRGIRSAHLDIDMRSPNGKVLLRVERLRCVSYSRISSDSTDRAFSSPFTRLVWRPDIRTISNAQARHRYPAPQGKQSSAWAVTNKLGHFVVQSIYETFGKLADGNRPHPSGDVGHFFAWIQKKGQHDQSPSMLEARKLACENRLLESIDELVKQAFHVLEVQIAKLLHDKMSDILFERRTGIDVIIGEGLLTPLYQSGLLMTGIYPQLHRIISGLAHADPNARILEIGGGTGGATRIAMNALNGPNGIKAYRDYTFTDISAGFLSGARELLGHLPDMKFSVFDIERDPVEQGYDEQTYNLIIACQVLHATSNMHRTLTNCRRLLKPGGRLVLLETNENFIVPGVVVGTFTGYWAGIPDGRVDAPFQSLDSWDRSLRAAGFSGLDVVLDDFPEPQNTTSVMLSTVPIHIPEKDVSGTLVHVLHSTPEVPRLVPKVVEGFEERGITATISSLGNGPVQLPPASHAVIFYDEQDLLANSSEKSLGVFQHLSENSATLLVLTSCGTVNGLNPDGALIPGLLRVLRNENPATEYGSIDIDATHFNVDSSEEQEIARRIVDCELDLRRSVLPEELESTPPDREFVWQKGCMWVSRHVPDAGFHSEHGLDNKSMKPELLPLSSQGAVRAVFESPGVPNSLCFASYEEMKEPLQPDYIDVEVAAIGLNSQDIDHWTGRVNANHLSSEYAGVVTAVGTNVYNLKVGDRVYGLGKGQFGNWTRGPSVLAQKLQPEDKMIQMASMPLAYTTATYVLEQIARLRKGQSVLIQSGAKDIGLAILNLAKTKEAVVFAIVETPEQVDFLTAKMGMPASRIISTIPTLAVLRRAAQGTCNGKFDVIVSTVSGEAQQSFPSMLSHLGHWIDMSQNEPQTLSTVNGRLLLHNASYCFVDPTAIFDTSPVLAAEIKQTVDKHYRKGLIGPIPRIEESDVSQIGSSLGNLANMIGKLVVSFENPESLVRMVPSPPSVRFDPKSFYVITGVLGGLGQSLVQWMASRGARHLALLSRRHVSSVPEAEKFITSLSNRGINVSCLVCDVSDAAQVNKVIKDLSSH.

In terms of domain architecture, Ketosynthase family 3 (KS3) spans 1–250 (MYALHLAVNA…GANAHCIIDH (250 aa)). A disordered region spans residues 276–325 (QNGHLNEFAANGTTNAPSRDHRNGITDGRADGNTNGHPNANGDVGGNPIN). A compositionally biased stretch (basic and acidic residues) spans 293–305 (SRDHRNGITDGRA). The interval 435–738 (FVFTGQGAQW…KSPVEQILKS (304 aa)) is malonyl-CoA:ACP transacylase (MAT). Residues 827-965 (HDLLGSKVVG…GCVKLIIKSS (139 aa)) form an N-terminal hotdog fold region. The interval 827–1137 (HDLLGSKVVG…ERLRCVSYSR (311 aa)) is dehydratase (DH) domain. In terms of domain architecture, PKS/mFAS DH spans 827-1141 (HDLLGSKVVG…CVSYSRISSD (315 aa)). His859 functions as the Proton acceptor; for dehydratase activity in the catalytic mechanism. Residues 979–1141 (TLRPVDVRAW…CVSYSRISSD (163 aa)) are C-terminal hotdog fold. The active-site Proton donor; for dehydratase activity is Asp1050. The tract at residues 1305-1494 (TGIYPQLHRI…GLDVVLDDFP (190 aa)) is methyltransferase (MT) domain. Residues 1731–2042 (GVPNSLCFAS…LANMIGKLVV (312 aa)) form an enoyl reductase (ER) domain region.

Functionally, polyketide synthase-like protein that lacks important domains such as carrier domain and does probably not function as a polyketide synthase. This chain is Polyketide synthase-like protein Preu9, found in Preussia isomera (Coprophilous fungus).